A 406-amino-acid polypeptide reads, in one-letter code: Endoplasmic reticulum resident protein 44 (406 aa).

An N-terminal signal peptide occupies residues 1-29 (MIPGIFLSLPDLRCSLLLLVTWVFTPVTA). A Thioredoxin domain is found at 30–138 (EIISLDTENI…VKALADYIRQ (109 aa)). 2 disulfides stabilise this stretch: Cys189/Cys241 and Cys301/Cys318. Residues 236–285 (WIQDKCVPLVREITFENGEELTEEGLPFLILFHMKEDTESLEIFQNEVAR) form an interaction with ITPR1 region. The tract at residues 360 to 387 (FHHGPDPTDTAPGEEVQDVASSPPESSF) is disordered. The span at 378-387 (VASSPPESSF) shows a compositional bias: polar residues. The short motif at 403-406 (RDEL) is the Prevents secretion from ER element.

In terms of assembly, forms mixed disulfides with both ERO1A and ERO1B and cargo folding intermediates; the interactions with ERO1A and ERO1B result in their retention in the endoplasmic reticulum. Directly interacts with ITPR1 in a pH-, redox state- and calcium-dependent manner, but not with ITPR2 or ITPR3. The strength of this interaction inversely correlates with calcium concentration.

Its subcellular location is the endoplasmic reticulum lumen. Mediates thiol-dependent retention in the early secretory pathway, forming mixed disulfides with substrate proteins through its conserved CRFS motif. Inhibits the calcium channel activity of ITPR1. May have a role in the control of oxidative protein folding in the endoplasmic reticulum. Required to retain ERO1A and ERO1B in the endoplasmic reticulum. The polypeptide is Endoplasmic reticulum resident protein 44 (ERP44) (Bos taurus (Bovine)).